Here is a 119-residue protein sequence, read N- to C-terminus: Large ribosomal subunit protein uL18 (119 aa).

The protein belongs to the universal ribosomal protein uL18 family. Part of the 50S ribosomal subunit; part of the 5S rRNA/L5/L18/L25 subcomplex. Contacts the 5S and 23S rRNAs.

In terms of biological role, this is one of the proteins that bind and probably mediate the attachment of the 5S RNA into the large ribosomal subunit, where it forms part of the central protuberance. In Clostridium kluyveri (strain ATCC 8527 / DSM 555 / NBRC 12016 / NCIMB 10680 / K1), this protein is Large ribosomal subunit protein uL18.